The following is a 299-amino-acid chain: Pyrroline-5-carboxylate reductase 2 (299 aa).

It belongs to the pyrroline-5-carboxylate reductase family. In terms of assembly, homodecamer; composed of 5 homodimers.

The enzyme catalyses L-proline + NADP(+) = (S)-1-pyrroline-5-carboxylate + NADPH + 2 H(+). The catalysed reaction is L-proline + NAD(+) = (S)-1-pyrroline-5-carboxylate + NADH + 2 H(+). It functions in the pathway amino-acid biosynthesis; L-proline biosynthesis; L-proline from L-glutamate 5-semialdehyde: step 1/1. In Dictyostelium discoideum (Social amoeba), this protein is Pyrroline-5-carboxylate reductase 2 (pycr2).